A 213-amino-acid polypeptide reads, in one-letter code: A-type ATP synthase subunit D (213 aa).

It belongs to the V-ATPase D subunit family. Has multiple subunits with at least A(3), B(3), C, D, E, F, H, I and proteolipid K(x).

The protein localises to the cell membrane. Functionally, component of the A-type ATP synthase that produces ATP from ADP in the presence of a proton gradient across the membrane. In Saccharolobus solfataricus (strain ATCC 35092 / DSM 1617 / JCM 11322 / P2) (Sulfolobus solfataricus), this protein is A-type ATP synthase subunit D.